The sequence spans 383 residues: Succinyl-diaminopimelate desuccinylase (383 aa).

His-74 contributes to the Zn(2+) binding site. The active site involves Asp-76. Asp-107 serves as a coordination point for Zn(2+). Glu-141 serves as the catalytic Proton acceptor. Glu-142, Glu-170, and His-356 together coordinate Zn(2+).

This sequence belongs to the peptidase M20A family. DapE subfamily. Homodimer. Requires Zn(2+) as cofactor. Co(2+) serves as cofactor.

The enzyme catalyses N-succinyl-(2S,6S)-2,6-diaminopimelate + H2O = (2S,6S)-2,6-diaminopimelate + succinate. It participates in amino-acid biosynthesis; L-lysine biosynthesis via DAP pathway; LL-2,6-diaminopimelate from (S)-tetrahydrodipicolinate (succinylase route): step 3/3. Functionally, catalyzes the hydrolysis of N-succinyl-L,L-diaminopimelic acid (SDAP), forming succinate and LL-2,6-diaminopimelate (DAP), an intermediate involved in the bacterial biosynthesis of lysine and meso-diaminopimelic acid, an essential component of bacterial cell walls. The polypeptide is Succinyl-diaminopimelate desuccinylase (Cupriavidus taiwanensis (strain DSM 17343 / BCRC 17206 / CCUG 44338 / CIP 107171 / LMG 19424 / R1) (Ralstonia taiwanensis (strain LMG 19424))).